Here is a 427-residue protein sequence, read N- to C-terminus: 3-phosphoshikimate 1-carboxyvinyltransferase (427 aa).

3 residues coordinate 3-phosphoshikimate: K22, S23, and R27. K22 serves as a coordination point for phosphoenolpyruvate. Residues G96 and R124 each coordinate phosphoenolpyruvate. S169, S170, Q171, S197, D313, N336, and K340 together coordinate 3-phosphoshikimate. Phosphoenolpyruvate is bound at residue Q171. D313 serves as the catalytic Proton acceptor. R344, R386, and K411 together coordinate phosphoenolpyruvate.

The protein belongs to the EPSP synthase family. Monomer.

The protein resides in the cytoplasm. The enzyme catalyses 3-phosphoshikimate + phosphoenolpyruvate = 5-O-(1-carboxyvinyl)-3-phosphoshikimate + phosphate. The protein operates within metabolic intermediate biosynthesis; chorismate biosynthesis; chorismate from D-erythrose 4-phosphate and phosphoenolpyruvate: step 6/7. In terms of biological role, catalyzes the transfer of the enolpyruvyl moiety of phosphoenolpyruvate (PEP) to the 5-hydroxyl of shikimate-3-phosphate (S3P) to produce enolpyruvyl shikimate-3-phosphate and inorganic phosphate. In Salmonella dublin (strain CT_02021853), this protein is 3-phosphoshikimate 1-carboxyvinyltransferase.